The sequence spans 173 residues: uncharacterized protein (173 aa).

An N-terminal signal peptide occupies residues 1-25; that stretch reads MPVVTAVGRRRGFAMPWVSTARSGA.

This is an uncharacterized protein from Mycobacterium bovis (strain ATCC BAA-935 / AF2122/97).